A 70-amino-acid chain; its full sequence is Protein FlmC (70 aa).

In terms of biological role, component of a type I toxin-antitoxin (TA) system. Either this protein or sequences upstream of it are required for translation of downstream flmA; this could be translationally coupled to flmA. This Escherichia coli (strain K12) protein is Protein FlmC (flmC).